A 276-amino-acid chain; its full sequence is Syntaxin-12 (276 aa).

Ser2 carries the N-acetylserine modification. Residues 2–248 (SYGPLDMYRN…RAAYYQKKSR (247 aa)) lie on the Cytoplasmic side of the membrane. Residues 33-131 (IQRISQATAQ…RRVSEKEKES (99 aa)) adopt a coiled-coil conformation. A phosphoserine mark is found at Ser139, Ser142, Ser218, and Ser225. The t-SNARE coiled-coil homology domain maps to 178-240 (LELIKERETA…ERATEQLQRA (63 aa)). Residues 249 to 269 (KKMCILVLVLSVIIVILGLII) form a helical; Anchor for type IV membrane protein membrane-spanning segment. The Vesicular portion of the chain corresponds to 270-276 (WLVYKTK).

The protein belongs to the syntaxin family. Associates with the BLOC-1 complex. Interacts with BLOC1S6. Interacts with NAPA and SNAP23. Identified in a complex containing STX6, STX12, VAMP4 and VTI1A. Interacts with GRIPAP1. Forms a complex with GRIP1, GRIA2 and NSG1; controls the intracellular fate of AMPAR and the endosomal sorting of the GRIA2 subunit toward recycling and membrane targeting. Interacts with NSG1. Interacts with TPC1. Interacts (via N-terminus) with VPS13B.

Its subcellular location is the endosome membrane. It is found in the golgi apparatus membrane. The protein resides in the endomembrane system. The protein localises to the early endosome membrane. It localises to the recycling endosome membrane. In terms of biological role, SNARE promoting fusion of transport vesicles with target membranes. Together with SNARE STX6, promotes movement of vesicles from endosomes to the cell membrane, and may therefore function in the endocytic recycling pathway. Through complex formation with GRIP1, GRIA2 and NSG1 controls the intracellular fate of AMPAR and the endosomal sorting of the GRIA2 subunit toward recycling and membrane targeting. This Pongo abelii (Sumatran orangutan) protein is Syntaxin-12 (STX12).